The sequence spans 337 residues: Glyceraldehyde-3-phosphate dehydrogenase 2 (337 aa).

NADP(+)-binding positions include 11 to 12 (RI), Asp-35, Arg-80, and Thr-122. Residues 153 to 155 (SCT), Thr-184, Arg-199, 212 to 213 (TG), and Arg-235 each bind D-glyceraldehyde 3-phosphate. Cys-154 acts as the Nucleophile in catalysis. Asn-317 serves as a coordination point for NADP(+).

In terms of assembly, homotetramer.

It localises to the cytoplasm. It catalyses the reaction D-glyceraldehyde 3-phosphate + phosphate + NADP(+) = (2R)-3-phospho-glyceroyl phosphate + NADPH + H(+). The enzyme catalyses D-glyceraldehyde 3-phosphate + phosphate + NAD(+) = (2R)-3-phospho-glyceroyl phosphate + NADH + H(+). The protein operates within carbohydrate biosynthesis; Calvin cycle. Its function is as follows. Gap2 has a major role in carbon fixation as a component of the Calvin cycle. Catalyzes the oxidative phosphorylation of glyceraldehyde 3-phosphate (G3P) to 1,3-bisphosphoglycerate (BPG) using the cofactor NADP. The first reaction step involves the formation of a hemiacetal intermediate between G3P and a cysteine residue, and this hemiacetal intermediate is then oxidized to a thioester, with concomitant reduction of NADP to NADPH. The reduced NADPH is then exchanged with the second NAD, and the thioester is attacked by a nucleophilic inorganic phosphate to produce BPG. The protein is Glyceraldehyde-3-phosphate dehydrogenase 2 (gap2) of Nostoc sp. (strain PCC 7120 / SAG 25.82 / UTEX 2576).